A 667-amino-acid chain; its full sequence is Holliday junction recognition protein (667 aa).

Positions 78 to 126 (LNGQAPEGDSESSGADTSLEENWPSCSSAMREASGDPRQRQPAVPGNTL) are disordered. Phosphoserine is present on residues Ser169, Ser185, and Ser195. 2 disordered regions span residues 181-201 (ISAK…GQGP) and 279-317 (RRRP…EPGK). Positions 279-297 (RRRPSRKQGLHKNRTHCPR) are enriched in basic residues. Phosphoserine is present on residues Ser388, Ser424, Ser449, and Ser462. Residues 443–530 (YRSGSKSPGS…NSEPTGKAVW (88 aa)) form a disordered region. The span at 466–482 (GREKTERPGEALEDLRG) shows a compositional bias: basic and acidic residues. Positions 496-515 (SCPSPEGSPSRSPSHSQLSS) are enriched in low complexity. Residue Lys554 forms a Glycyl lysine isopeptide (Lys-Gly) (interchain with G-Cter in SUMO2) linkage. Ser567 is modified (phosphoserine). The interval 596 to 617 (KRLNPDSPQQSSQKRSISPGCH) is disordered. The span at 601–611 (DSPQQSSQKRS) shows a compositional bias: polar residues. Ser613 is modified (phosphoserine).

As to quaternary structure, interacts with CENPA (via CATD domain); the interaction is direct and specific for CENPA since it does not interact with H3.1- or H3.3-containing nucleosomes. Heterotrimer composed of HJURP, CENPA and histone H4, where HJURP interacts with the dimer formed by CENPA and histone H4 and prevents tetramerization of CENPA and H4. Identified in a centromere complex containing histones H2A, H2B and H4, and at least CENPA, CENPB, CENPC, CENPT, CENPN, HJURP, SUPT16H, SSRP1 and RSF1. Interacts with 14-3-3 family members in a phosphorylation-dependent manner. Interacts with MSH5 and NBN.

It localises to the nucleus. It is found in the nucleolus. The protein localises to the chromosome. The protein resides in the centromere. Its function is as follows. Centromeric protein that plays a central role in the incorporation and maintenance of histone H3-like variant CENPA at centromeres. Acts as a specific chaperone for CENPA and is required for the incorporation of newly synthesized CENPA molecules into nucleosomes at replicated centromeres. Prevents CENPA-H4 tetramerization and prevents premature DNA binding by the CENPA-H4 tetramer. Directly binds Holliday junctions. In Mus musculus (Mouse), this protein is Holliday junction recognition protein (Hjurp).